The sequence spans 122 residues: Large ribosomal subunit protein uL14c (122 aa).

Belongs to the universal ribosomal protein uL14 family. Part of the 50S ribosomal subunit.

Its subcellular location is the plastid. The protein resides in the chloroplast. In terms of biological role, binds to 23S rRNA. In Oenothera biennis (German evening primrose), this protein is Large ribosomal subunit protein uL14c.